Here is a 510-residue protein sequence, read N- to C-terminus: 3,4-dihydroxyphenylacetaldehyde synthase (510 aa).

Asn192 is an active-site residue. Position 303 is an N6-(pyridoxal phosphate)lysine (Lys303).

It belongs to the group II decarboxylase family. Requires pyridoxal 5'-phosphate as cofactor.

It carries out the reaction L-dopa + O2 + H2O + H(+) = 3,4-dihydroxyphenylacetaldehyde + H2O2 + NH4(+) + CO2. Its function is as follows. Catalyzes the decarboxylation-oxidative deamination of L-3,4-dihydroxyphenylalanine (L-DOPA) to 3,4-dihydroxylphenylacetaldehyde (DHPAA). Involved in cuticle development. Probably responsible for the protein cross-linking during the development of flexible cuticles. This chain is 3,4-dihydroxyphenylacetaldehyde synthase (amd), found in Drosophila melanogaster (Fruit fly).